Here is a 96-residue protein sequence, read N- to C-terminus: VKVTFKVEKGSDPKKLVLDIKYTRPGDTLAEVELRQHGSEEWEPLTKKGNLWEVKSSKPLTGPFNFRFMSKGGMRNVFDEVIPTAFKIGTTYTPEE.

Positions 14–94 (KKLVLDIKYT…AFKIGTTYTP (81 aa)) constitute an Expansin-like CBD domain.

It belongs to the expansin family. Expansin B subfamily.

The protein localises to the secreted. This is Pollen allergen Dac g 3 from Dactylis glomerata (Orchard grass).